A 60-amino-acid polypeptide reads, in one-letter code: U-actitoxin-Avd12b (60 aa).

The N-terminal stretch at 1–6 (SKEGMS) is a signal peptide. Positions 7-12 (YEEPEN) are excised as a propeptide. The EGF-like domain maps to 14 to 56 (EGVACTGQYAESFCLNGGTCRYIQSIGEYYCICVGDYTGHRCE). 3 disulfide bridges follow: Cys18–Cys33, Cys27–Cys44, and Cys46–Cys55.

The protein belongs to the EGF domain peptide family.

The protein resides in the secreted. It localises to the nematocyst. Its function is as follows. Has both toxic and EGF activity. Its EGF activity consists of rounding cells (morphological change) and inducing tyrosine phosphorylation of the EGFR in A431 cells, but with a lower potency that human EGF. In Anemonia viridis (Snakelocks anemone), this protein is U-actitoxin-Avd12b.